We begin with the raw amino-acid sequence, 334 residues long: 3-ketodihydrosphingosine reductase (334 aa).

The N-terminal stretch at 1 to 20 (MIIYILFSLLAAVIVHLVYK) is a signal peptide. Residues G36, S38, S39, G40, R62, K66, D100, and I101 each coordinate NADPH. The GXSXG signature appears at 36–40 (GGSSG). S182 (proton donor) is an active-site residue. The active-site Proton acceptor is Y196. NADP(+)-binding residues include Y196 and K200. The Lowers pKa of active site Tyr role is filled by K200.

Belongs to the short-chain dehydrogenases/reductases (SDR) family.

It is found in the endoplasmic reticulum. It carries out the reaction sphinganine + NADP(+) = 3-oxosphinganine + NADPH + H(+). It functions in the pathway lipid metabolism; sphingolipid metabolism. Functionally, catalyzes the reduction of 3'-oxosphinganine (3-ketodihydrosphingosine/KDS) to sphinganine (dihydrosphingosine/DHS), the second step of de novo sphingolipid biosynthesis. The sequence is that of 3-ketodihydrosphingosine reductase (ksrA-1) from Dictyostelium discoideum (Social amoeba).